A 242-amino-acid polypeptide reads, in one-letter code: Argininosuccinate synthase (242 aa).

Belongs to the argininosuccinate synthase family. Type 2 subfamily. In terms of assembly, homotetramer.

Its subcellular location is the cytoplasm. It carries out the reaction L-citrulline + L-aspartate + ATP = 2-(N(omega)-L-arginino)succinate + AMP + diphosphate + H(+). It functions in the pathway amino-acid biosynthesis; L-arginine biosynthesis; L-arginine from L-ornithine and carbamoyl phosphate: step 2/3. This is Argininosuccinate synthase (argG) from Dickeya chrysanthemi (Pectobacterium chrysanthemi).